Consider the following 386-residue polypeptide: uncharacterized protein (386 aa).

Transmembrane regions (helical) follow at residues 54 to 74 (AVLQMIDPPALVGCIAQAIVA) and 347 to 367 (LLGGIPLAGFFAAGEIGPIAG).

The protein to M.tuberculosis Rv0628c.

The protein localises to the cell membrane. This is an uncharacterized protein from Mycobacterium tuberculosis (strain CDC 1551 / Oshkosh).